We begin with the raw amino-acid sequence, 369 residues long: D-alanine--D-alanine ligase (369 aa).

The ATP-grasp domain maps to 152-359; sequence KKLFAAEGLP…YPSLLATMVE (208 aa). Position 180 to 235 (180 to 235) interacts with ATP; it reads RERLGLPVFVKPARGGSSIGVSRVSSWDELDAAVAAARDHDPKVIVEAAIAGRELE. Residues aspartate 314, glutamate 326, and asparagine 328 each contribute to the Mg(2+) site.

This sequence belongs to the D-alanine--D-alanine ligase family. It depends on Mg(2+) as a cofactor. Requires Mn(2+) as cofactor.

It localises to the cytoplasm. It carries out the reaction 2 D-alanine + ATP = D-alanyl-D-alanine + ADP + phosphate + H(+). The protein operates within cell wall biogenesis; peptidoglycan biosynthesis. Its function is as follows. Cell wall formation. The polypeptide is D-alanine--D-alanine ligase (Mycolicibacterium paratuberculosis (strain ATCC BAA-968 / K-10) (Mycobacterium paratuberculosis)).